The chain runs to 220 residues: Small ribosomal subunit protein uS3c (220 aa).

The region spanning 48-119 (VQKHTNNPFH…KLCLILIKID (72 aa)) is the KH type-2 domain.

It belongs to the universal ribosomal protein uS3 family. Part of the 30S ribosomal subunit.

The protein resides in the plastid. It localises to the chloroplast. The polypeptide is Small ribosomal subunit protein uS3c (rps3) (Psilotum nudum (Whisk fern)).